The chain runs to 337 residues: MMSNYGNMMDSPKSSPHGGGRSPVVARQDSSGTLKTTISLGKTPTIIHTGPFYSMKEPPAKAELTGDKDLMTEYGLHHTLTKFKEKKFKESLASFLQNIPGINDLITHPVENSTLRSVIEKPPIGGKELLPLTPVQLAGFRLHPGPLPEQYRTTYVTPARKHKNKHKKQKHKDGVTTGQESTLLDSAGLETYEKKHKKQKRHEDDKERKKRKKEKKRKKKNQSPEPGVGLLPGGASLGGAAGVMGATSLGSLGGGPGGPGLSSLSASMGPGVVGNMNSFSSSMQMQQQQQMPMQQQQMSSGGLLGSVLGTSGGPGGGGGGGGGGGGGVGGSLLMSQF.

Disordered regions lie at residues 1 to 38 (MMSNYGNMMDSPKSSPHGGGRSPVVARQDSSGTLKTTI), 155 to 234 (YVTP…LPGG), and 297 to 337 (QMSS…MSQF). Positions 28–38 (QDSSGTLKTTI) are enriched in polar residues. Basic residues-rich tracts occupy residues 159–171 (ARKHKNKHKKQKH) and 208–221 (RKKRKKEKKRKKKN). Residues 189 to 223 (LETYEKKHKKQKRHEDDKERKKRKKEKKRKKKNQS) adopt a coiled-coil conformation. Over residues 297-309 (QMSSGGLLGSVLG) the composition is skewed to low complexity. Over residues 310-330 (TSGGPGGGGGGGGGGGGGVGG) the composition is skewed to gly residues.

The protein belongs to the Mediator complex subunit 19 family. In terms of assembly, component of the Mediator complex.

The protein resides in the nucleus. Its function is as follows. Component of the Mediator complex, a coactivator involved in the regulated transcription of nearly all RNA polymerase II-dependent genes. Mediator functions as a bridge to convey information from gene-specific regulatory proteins to the basal RNA polymerase II transcription machinery. Mediator is recruited to promoters by direct interactions with regulatory proteins and serves as a scaffold for the assembly of a functional preinitiation complex with RNA polymerase II and the general transcription factors. The polypeptide is Mediator of RNA polymerase II transcription subunit 19 (MED19) (Drosophila melanogaster (Fruit fly)).